Consider the following 158-residue polypeptide: G-protein-signaling modulator 3 (158 aa).

The tract at residues 1–53 is disordered; sequence MEAERPQEDGEQSLPQDDQGWPPVNSTARPWRSAPPSPPPPGTRHTALGPRSG. Phosphoserine occurs at positions 33 and 37. A compositionally biased stretch (pro residues) spans 33 to 42; sequence SAPPSPPPPG. The span at 43 to 53 shows a compositional bias: low complexity; the sequence is TRHTALGPRSG. Phosphoserine is present on residues S54 and S57. T60 is subject to Phosphothreonine. Residues 60–82 enclose the GoLoco 1 domain; that stretch reads TELLLDLVAEAQSRRLEEQRAAF. The tract at residues 78–97 is disordered; the sequence is QRAAFHTPKVPPSLAPTPPR. Over residues 86–96 the composition is skewed to pro residues; sequence KVPPSLAPTPP. 2 GoLoco domains span residues 102–124 and 130–153; these read KEQLYSTILSHQCQRIEAQRSDP and GQELLELLLRVQGGGRMEDQRSRP.

The protein resides in the cytoplasm. In terms of biological role, interacts with subunit of G(i) alpha proteins and regulates the activation of G(i) alpha proteins. The polypeptide is G-protein-signaling modulator 3 (Gpsm3) (Rattus norvegicus (Rat)).